Here is a 471-residue protein sequence, read N- to C-terminus: ATP synthase subunit beta (471 aa).

Gly153–Thr160 serves as a coordination point for ATP.

The protein belongs to the ATPase alpha/beta chains family. As to quaternary structure, F-type ATPases have 2 components, CF(1) - the catalytic core - and CF(0) - the membrane proton channel. CF(1) has five subunits: alpha(3), beta(3), gamma(1), delta(1), epsilon(1). CF(0) has four main subunits: a(1), b(1), b'(1) and c(9-12).

It is found in the cell membrane. The catalysed reaction is ATP + H2O + 4 H(+)(in) = ADP + phosphate + 5 H(+)(out). In terms of biological role, produces ATP from ADP in the presence of a proton gradient across the membrane. The catalytic sites are hosted primarily by the beta subunits. The chain is ATP synthase subunit beta from Chloroflexus aurantiacus (strain ATCC 29364 / DSM 637 / Y-400-fl).